The following is a 210-amino-acid chain: Probable GTP-binding protein EngB (210 aa).

The 175-residue stretch at 25 to 199 folds into the EngB-type G domain; sequence CGIEVAFAGR…RQKLDSWFSE (175 aa). GTP contacts are provided by residues 33–40, 60–64, 78–81, 145–148, and 178–180; these read GRSNAGKS, GRTQL, DLPG, TKAD, and FSS. 2 residues coordinate Mg(2+): Ser-40 and Thr-62.

This sequence belongs to the TRAFAC class TrmE-Era-EngA-EngB-Septin-like GTPase superfamily. EngB GTPase family. Requires Mg(2+) as cofactor.

Necessary for normal cell division and for the maintenance of normal septation. This Salmonella dublin (strain CT_02021853) protein is Probable GTP-binding protein EngB.